The chain runs to 363 residues: Histidinol-phosphate aminotransferase (363 aa).

Lys218 is modified (N6-(pyridoxal phosphate)lysine).

It belongs to the class-II pyridoxal-phosphate-dependent aminotransferase family. Histidinol-phosphate aminotransferase subfamily. In terms of assembly, homodimer. Pyridoxal 5'-phosphate serves as cofactor.

It catalyses the reaction L-histidinol phosphate + 2-oxoglutarate = 3-(imidazol-4-yl)-2-oxopropyl phosphate + L-glutamate. It participates in amino-acid biosynthesis; L-histidine biosynthesis; L-histidine from 5-phospho-alpha-D-ribose 1-diphosphate: step 7/9. The chain is Histidinol-phosphate aminotransferase from Xanthomonas euvesicatoria pv. vesicatoria (strain 85-10) (Xanthomonas campestris pv. vesicatoria).